The following is a 509-amino-acid chain: ATP synthase subunit alpha (509 aa).

Residue Gly-169 to Thr-176 coordinates ATP.

It belongs to the ATPase alpha/beta chains family. As to quaternary structure, F-type ATPases have 2 components, CF(1) - the catalytic core - and CF(0) - the membrane proton channel. CF(1) has five subunits: alpha(3), beta(3), gamma(1), delta(1), epsilon(1). CF(0) has four main subunits: a(1), b(1), b'(1) and c(9-12).

The protein localises to the cell inner membrane. The catalysed reaction is ATP + H2O + 4 H(+)(in) = ADP + phosphate + 5 H(+)(out). Produces ATP from ADP in the presence of a proton gradient across the membrane. The alpha chain is a regulatory subunit. This is ATP synthase subunit alpha from Bradyrhizobium sp. (strain ORS 278).